The chain runs to 431 residues: Enolase (431 aa).

Gln167 serves as a coordination point for (2R)-2-phosphoglycerate. Glu209 functions as the Proton donor in the catalytic mechanism. 3 residues coordinate Mg(2+): Asp246, Glu289, and Asp316. Residues Lys341, Arg370, Ser371, and Lys392 each coordinate (2R)-2-phosphoglycerate. Lys341 acts as the Proton acceptor in catalysis.

The protein belongs to the enolase family. As to quaternary structure, component of the RNA degradosome, a multiprotein complex involved in RNA processing and mRNA degradation. It depends on Mg(2+) as a cofactor.

Its subcellular location is the cytoplasm. It is found in the secreted. The protein resides in the cell surface. The enzyme catalyses (2R)-2-phosphoglycerate = phosphoenolpyruvate + H2O. It participates in carbohydrate degradation; glycolysis; pyruvate from D-glyceraldehyde 3-phosphate: step 4/5. Catalyzes the reversible conversion of 2-phosphoglycerate (2-PG) into phosphoenolpyruvate (PEP). It is essential for the degradation of carbohydrates via glycolysis. In Shewanella oneidensis (strain ATCC 700550 / JCM 31522 / CIP 106686 / LMG 19005 / NCIMB 14063 / MR-1), this protein is Enolase.